Here is a 363-residue protein sequence, read N- to C-terminus: DNA polymerase IV (363 aa).

The UmuC domain occupies 14–197 (IIHIDMDAFF…LPVEKFHGVG (184 aa)). Residues D18 and D115 each contribute to the Mg(2+) site. Residue E116 is part of the active site.

Belongs to the DNA polymerase type-Y family. As to quaternary structure, monomer. Mg(2+) serves as cofactor.

It localises to the cytoplasm. The catalysed reaction is DNA(n) + a 2'-deoxyribonucleoside 5'-triphosphate = DNA(n+1) + diphosphate. Its function is as follows. Poorly processive, error-prone DNA polymerase involved in untargeted mutagenesis. Copies undamaged DNA at stalled replication forks, which arise in vivo from mismatched or misaligned primer ends. These misaligned primers can be extended by PolIV. Exhibits no 3'-5' exonuclease (proofreading) activity. May be involved in translesional synthesis, in conjunction with the beta clamp from PolIII. The protein is DNA polymerase IV of Lactococcus lactis subsp. lactis (strain IL1403) (Streptococcus lactis).